A 1163-amino-acid polypeptide reads, in one-letter code: DNA-directed RNA polymerase subunit beta'' (1163 aa).

Cys16, Cys87, Cys94, and Cys97 together coordinate Zn(2+).

Belongs to the RNA polymerase beta' chain family. RpoC2 subfamily. As to quaternary structure, in plastids the minimal PEP RNA polymerase catalytic core is composed of four subunits: alpha, beta, beta', and beta''. When a (nuclear-encoded) sigma factor is associated with the core the holoenzyme is formed, which can initiate transcription. Zn(2+) serves as cofactor.

It localises to the plastid. It is found in the chloroplast. It carries out the reaction RNA(n) + a ribonucleoside 5'-triphosphate = RNA(n+1) + diphosphate. Functionally, DNA-dependent RNA polymerase catalyzes the transcription of DNA into RNA using the four ribonucleoside triphosphates as substrates. The protein is DNA-directed RNA polymerase subunit beta'' (rpoC2) of Pisum sativum (Garden pea).